An 838-amino-acid chain; its full sequence is MTQVTVKQLADEVKTPVERLLQQMREAGLPHTAAEEHVSDSEKQSLLTHLKSSHKAKVEEPRKITLQRKTTSTLRVAGSKSISVEVRKKKVFVQRSPEEIEAERQRELEERRAVENAARQKAEEEAKRRAEEEARRQPAPVAEPVAAQAAAPAPAPVVEPVQEAPVATAAPAADARKKDEQRRPDKTRNDDNRRGGDGERKNAPHRASVKEKAPAPRVAPRTTDEESDGFRRGGRGKAKLKKRNAHGFQSPTGPVVRDVQIGETITVGELAQQMSVKAAEVIKFMFKLGTPATINQVLDQETAQLVAEELGHKVTLVSDTALEDSLAESLKFEGEAVARAPVVTVMGHVDHGKTSLLDYIRRAKVAAGEAGGITQHIGAYHVETERGMVTFLDTPGHAAFTAMRARGAKATDIVILVVAADDGVMPQTVEAVQHAQAAGVPLVVAVNKIDKPGADLDRIRSELSVHGVTSEDWGGDTPFVPVSAKMGTGVDDLLEAVLLQAEVLELKATPSAPGRGVVVESRLDKGRGPVATVLVQDGTLRQGDMVLVGSNYGRVRAMLDENGKPIKEAGPSIPVEILGLDGTPDAGDEMSVVADEKKAREVALFRQGKFREVKLARAHAGKLENIFESMGQEEKKTLNIVLKSDVRGSLEALQGALNGLGNDEVQVRVVGGGVGGITESDANLALASNAVLFGFNVRADAGARKIVEQEGLDMRYYNVIYDIIEDVKKALTGMLGSDVRENILGVAEVRDVFRSPKFGAIAGCMVIEGVVHRNRPIRVLREDIVIFEGELESLRRFKDDASEVRAGMECGIGVKSYNDVKVGDKIEVFEKVQVARSL.

Disordered regions lie at residues 30-60 and 94-254; these read PHTA…KVEE and QRSP…PTGP. 2 stretches are compositionally biased toward basic and acidic residues: residues 33 to 43 and 96 to 136; these read AAEEHVSDSEK and SPEE…EARR. Low complexity predominate over residues 137–173; that stretch reads QPAPVAEPVAAQAAAPAPAPVVEPVQEAPVATAAPAA. Composition is skewed to basic and acidic residues over residues 174–214 and 222–231; these read DARK…EKAP and TTDEESDGFR. Residues 232 to 245 are compositionally biased toward basic residues; that stretch reads RGGRGKAKLKKRNA. Residues 338 to 507 form the tr-type G domain; the sequence is ARAPVVTVMG…LLQAEVLELK (170 aa). A G1 region spans residues 347–354; the sequence is GHVDHGKT. 347–354 serves as a coordination point for GTP; that stretch reads GHVDHGKT. Residues 372-376 are G2; sequence GITQH. Positions 393 to 396 are G3; sequence DTPG. Residues 393–397 and 447–450 each bind GTP; these read DTPGH and NKID. A G4 region spans residues 447 to 450; that stretch reads NKID. The interval 483 to 485 is G5; sequence SAK.

This sequence belongs to the TRAFAC class translation factor GTPase superfamily. Classic translation factor GTPase family. IF-2 subfamily.

The protein resides in the cytoplasm. Its function is as follows. One of the essential components for the initiation of protein synthesis. Protects formylmethionyl-tRNA from spontaneous hydrolysis and promotes its binding to the 30S ribosomal subunits. Also involved in the hydrolysis of GTP during the formation of the 70S ribosomal complex. The sequence is that of Translation initiation factor IF-2 from Pseudomonas fluorescens (strain ATCC BAA-477 / NRRL B-23932 / Pf-5).